Here is a 295-residue protein sequence, read N- to C-terminus: sn-glycerol-3-phosphate transport system permease protein UgpA (295 aa).

Residues 1–11 (MSSSRPGFSCS) are Cytoplasmic-facing. Residues 12-32 (WLPYLLVLPQLAITAVFFLWP) form a helical membrane-spanning segment. The Periplasmic segment spans residues 33-80 (AGEALWYSVQMLDPFGLSSEFVGLSNFIALFHDEYYLASFYTTLIFSS). The ABC transmembrane type-1 domain occupies 72–284 (FYTTLIFSSL…LLVIGLTVIQ (213 aa)). A helical transmembrane segment spans residues 81-101 (LVAGIGLVVSLFLAAMVDYVL). Topologically, residues 102–109 (RGSRIYQT) are cytoplasmic. Residues 110–130 (LMILPYAVAPAVAAVLWIFLF) form a helical membrane-spanning segment. Residues 131–157 (NPGLGLITHFLASLGYNWNHAQNSGQA) are Periplasmic-facing. Residues 158 to 178 (MFLVVLASVWKQISYNFLFFL) traverse the membrane as a helical segment. The Cytoplasmic portion of the chain corresponds to 179 to 207 (AALQSIPRSLVEAAAIDGAGPVRRFFNLV). A helical membrane pass occupies residues 208 to 228 (LPLISPVSFFLLVVNLVYAFF). The Periplasmic segment spans residues 229–262 (DTFPVIDAATGGGPMQATTTLIYKIYREGFAGLD). A helical membrane pass occupies residues 263–283 (LSSSAAQSVVLMLLVIGLTVI). The Cytoplasmic portion of the chain corresponds to 284 to 295 (QFRFVERKVRYQ).

Belongs to the binding-protein-dependent transport system permease family. UgpAE subfamily. As to quaternary structure, the complex is composed of two ATP-binding proteins (UgpC), two transmembrane proteins (UgpA and UgpE) and a solute-binding protein (UgpB).

The protein resides in the cell inner membrane. Part of the ABC transporter complex UgpBAEC involved in sn-glycerol-3-phosphate (G3P) import. Probably responsible for the translocation of the substrate across the membrane. The protein is sn-glycerol-3-phosphate transport system permease protein UgpA (ugpA) of Yersinia enterocolitica serotype O:8 / biotype 1B (strain NCTC 13174 / 8081).